The sequence spans 103 residues: Large ribosomal subunit protein eL30 (103 aa).

This sequence belongs to the eukaryotic ribosomal protein eL30 family.

This Methanothrix thermoacetophila (strain DSM 6194 / JCM 14653 / NBRC 101360 / PT) (Methanosaeta thermophila) protein is Large ribosomal subunit protein eL30.